The sequence spans 538 residues: Cytochrome P450 monooxygenase okaG (538 aa).

A helical membrane pass occupies residues 3–23; it reads LISPLAAVLSAMAIVLGLLFF. Residue Cys-484 participates in heme binding.

Belongs to the cytochrome P450 family. The cofactor is heme.

It is found in the membrane. The catalysed reaction is 12-deshydroxyl okaramine E + 2 reduced [NADPH--hemoprotein reductase] + 2 O2 = 3-desmethyl okaramine B + 2 oxidized [NADPH--hemoprotein reductase] + 2 H2O + 2 H(+). It functions in the pathway alkaloid biosynthesis. Nonribosomal peptide synthetase; part of the gene cluster that mediates the biosynthesis of okaramine B, a prenylated indole alkaloid that possesses an unusual octacyclic ring system, including a four-membered azetidine ring and an eight-membered azocine ring, and that exhibits insecticidal activity against silkworm larvae. Within the pathway, okaG acts as a 2,3-diol synthase that installs 2,3-diol on the okaramine scaffold to convert 12-deshydroxyl okaramine E into 3-desmethyl okaramine B. OkaG is also able to produce use okaramine E and produce okaramine D with the help of the methyltransferase okaF. The biosynthesis begins with the NRPS okaA that condenses two tryptophan molecules into cyclo(L-Trp-L-Trp). Prenylation by the prenyltransferase okaC then leads to the formation of cyclo(N8-(alpha,alpha-dimethylallyl)-L-Trp-6a-(alpha,alpha-dime-thylallyl)-L-Trp). This is followed by indole 2,3-epoxidation by the FAD-dependent monooxygenase okaB to facilitate the formation of the hexahydropyrrolo[2,3-b]indole (HPI) moiety of okaramine C. The cytochrome P450 monooxygenase okaD then likely catalyzes formation of the eight-membered ring of okaramine A. The dioxygenase okaE further forms the unusual 2-dimethyl-3-methyl-azetidine ring to yield 12-deshydroxyl okaramine E, as well as the hydroxylation of 12-deshydroxyl okaramine E to produce okaramine E. The cytochrome P450 monoxygenase okaG converts 12-deshydroxyl okaramine E into 3-desmethyl okaramine B which is further methylated by the methyltransferase okaF into okaramine B. In a shunt pathway, okaG and okaF together are also able to convert okaramine E into okaramine D. Okaramine H is produced by nonenzymatic conversion from okaramine A. In Penicillium ochrochloron, this protein is Cytochrome P450 monooxygenase okaG.